Reading from the N-terminus, the 457-residue chain is Argininosuccinate lyase (457 aa).

This sequence belongs to the lyase 1 family. Argininosuccinate lyase subfamily.

It localises to the cytoplasm. The enzyme catalyses 2-(N(omega)-L-arginino)succinate = fumarate + L-arginine. Its pathway is amino-acid biosynthesis; L-arginine biosynthesis; L-arginine from L-ornithine and carbamoyl phosphate: step 3/3. The protein is Argininosuccinate lyase of Shigella flexneri serotype 5b (strain 8401).